The primary structure comprises 394 residues: [Pyruvate dehydrogenase (acetyl-transferring)] kinase 1, mitochondrial (394 aa).

The transit peptide at 1 to 20 (MWKIMRSWKCGGMRWAHRQR) directs the protein to the mitochondrion. The Histidine kinase domain maps to 126 to 386 (AYPYELHNPP…DVYIKLKGPS (261 aa)). A Phosphohistidine; by autocatalysis modification is found at His-148. Residues 267–274 (EVFKNAFE), Asp-304, 323–324 (ST), and 347–352 (GMGFGL) contribute to the ATP site.

The protein belongs to the PDK/BCKDK protein kinase family. Interacts with PKP2.

It localises to the mitochondrion matrix. It catalyses the reaction L-seryl-[pyruvate dehydrogenase E1 alpha subunit] + ATP = O-phospho-L-seryl-[pyruvate dehydrogenase E1 alpha subunit] + ADP + H(+). Inhibits the mitochondrial pyruvate dehydrogenase complex by phosphorylation of the E1 alpha subunit (PDA1), thus contributing to the regulation of glucose metabolism. Also involved in telomere maintenance. This Saccharomyces cerevisiae (strain ATCC 204508 / S288c) (Baker's yeast) protein is [Pyruvate dehydrogenase (acetyl-transferring)] kinase 1, mitochondrial.